Consider the following 433-residue polypeptide: 23S rRNA (uracil(1939)-C(5))-methyltransferase RlmD (433 aa).

The TRAM domain maps to 10 to 68 (RTTTRQIITVSVNDLDSFGQGVARHNGKTLFIPGLLPQENAEVTVTEDKKQYARAKVVR). Residues Cys81, Cys87, Cys90, and Cys162 each coordinate [4Fe-4S] cluster. Gln265, Phe294, Asn299, Glu315, Asn342, and Asp363 together coordinate S-adenosyl-L-methionine. Residue Cys389 is the Nucleophile of the active site.

The protein belongs to the class I-like SAM-binding methyltransferase superfamily. RNA M5U methyltransferase family. RlmD subfamily.

The enzyme catalyses uridine(1939) in 23S rRNA + S-adenosyl-L-methionine = 5-methyluridine(1939) in 23S rRNA + S-adenosyl-L-homocysteine + H(+). Functionally, catalyzes the formation of 5-methyl-uridine at position 1939 (m5U1939) in 23S rRNA. The chain is 23S rRNA (uracil(1939)-C(5))-methyltransferase RlmD from Escherichia coli O157:H7.